A 1088-amino-acid chain; its full sequence is RNA-directed RNA polymerase (1088 aa).

Positions leucine 501–isoleucine 687 constitute a RdRp catalytic domain.

The protein belongs to the reoviridae RNA-directed RNA polymerase family. In terms of assembly, interacts with VP3 (Potential). Interacts with VP2; this interaction activates VP1. Interacts with NSP5; this interaction is probably necessary for the formation of functional virus factories. Interacts with NSP2; this interaction is weak. It depends on Mg(2+) as a cofactor.

It localises to the virion. It carries out the reaction RNA(n) + a ribonucleoside 5'-triphosphate = RNA(n+1) + diphosphate. RNA-directed RNA polymerase that is involved in both transcription and genome replication. Together with VP3 capping enzyme, forms an enzyme complex positioned near the channels situated at each of the five-fold vertices of the core. Following infection, the outermost layer of the virus is lost, leaving a double-layered particle (DLP) made up of the core and VP6 shell. VP1 then catalyzes the transcription of fully conservative plus-strand genomic RNAs that are extruded through the DLP's channels into the cytoplasm where they function as mRNAs for translation of viral proteins. One copy of each of the viral (+)RNAs is also recruited during core assembly, together with newly synthesized polymerase complexes and VP2. The polymerase of these novo-formed particles catalyzes the synthesis of complementary minus-strands leading to dsRNA formation. To do so, the polymerase specifically recognizes and binds 4 bases 5'-UGUG-3' in the conserved 3'-sequence of plus-strand RNA templates. VP2 presumably activates the autoinhibited VP1-RNA complex to coordinate packaging and genome replication. Once dsRNA synthesis is complete, the polymerase switches to the transcriptional mode, thus providing secondary transcription. The protein is RNA-directed RNA polymerase of Rotavirus A (strain RVA/Cow/United States/NCDV-Lincoln/1969/G6P6[1]) (RV-A).